The following is a 94-amino-acid chain: Integration host factor subunit beta (94 aa).

This sequence belongs to the bacterial histone-like protein family. As to quaternary structure, heterodimer of an alpha and a beta chain.

This protein is one of the two subunits of integration host factor, a specific DNA-binding protein that functions in genetic recombination as well as in transcriptional and translational control. This chain is Integration host factor subunit beta, found in Yersinia pseudotuberculosis serotype O:1b (strain IP 31758).